The chain runs to 637 residues: Threonine--tRNA ligase (637 aa).

The TGS domain occupies 1–61; the sequence is MIKISLKNGK…NKDCKVEILT (61 aa). The segment at 242 to 532 is catalytic; that stretch reads DHRKLGKELD…LIEHYAGAFP (291 aa). Cysteine 333, histidine 384, and histidine 509 together coordinate Zn(2+).

It belongs to the class-II aminoacyl-tRNA synthetase family. In terms of assembly, homodimer. It depends on Zn(2+) as a cofactor.

The protein resides in the cytoplasm. The enzyme catalyses tRNA(Thr) + L-threonine + ATP = L-threonyl-tRNA(Thr) + AMP + diphosphate + H(+). Catalyzes the attachment of threonine to tRNA(Thr) in a two-step reaction: L-threonine is first activated by ATP to form Thr-AMP and then transferred to the acceptor end of tRNA(Thr). Also edits incorrectly charged L-seryl-tRNA(Thr). The chain is Threonine--tRNA ligase from Clostridium kluyveri (strain NBRC 12016).